Consider the following 218-residue polypeptide: MNLLIMGLPGAGKGTQAAKIVEEFGVAHISTGDMFRAAMANQTEMGRLAKSFIDKGELVPDEVTNGIVKERLAESDIAEKGFLLDGYPRTIEQAHALDETLKALDIKLDGVINIEVNPESLVERLSGRFICRSCGSTYHKVFNPTKVEGTCDVCGGHEFFQREDDKPETVKRRLDVNIAQGEPIIAHYRELGLVSDIQGNQDIDDVFADVKKAIAAIK.

10–15 contributes to the ATP binding site; it reads GAGKGT. Residues 30–59 form an NMP region; sequence STGDMFRAAMANQTEMGRLAKSFIDKGELV. AMP is bound by residues Thr31, Arg36, 57–59, 86–89, and Gln93; these read ELV and GYPR. The LID stretch occupies residues 127-165; sequence GRFICRSCGSTYHKVFNPTKVEGTCDVCGGHEFFQREDD. Arg128 is an ATP binding site. Positions 131 and 134 each coordinate Zn(2+). 137–138 provides a ligand contact to ATP; the sequence is TY. Zn(2+) is bound by residues Cys151 and Cys154. The AMP site is built by Arg162 and Arg173. ATP is bound at residue Gln201.

It belongs to the adenylate kinase family. In terms of assembly, monomer.

Its subcellular location is the cytoplasm. It carries out the reaction AMP + ATP = 2 ADP. It functions in the pathway purine metabolism; AMP biosynthesis via salvage pathway; AMP from ADP: step 1/1. Functionally, catalyzes the reversible transfer of the terminal phosphate group between ATP and AMP. Plays an important role in cellular energy homeostasis and in adenine nucleotide metabolism. The polypeptide is Adenylate kinase (Streptococcus thermophilus (strain CNRZ 1066)).